The primary structure comprises 256 residues: Ribosomal RNA small subunit methyltransferase J (256 aa).

Residues R104 to D105, E120 to R121, S156 to S157, and D174 each bind S-adenosyl-L-methionine.

This sequence belongs to the methyltransferase superfamily. RsmJ family.

It is found in the cytoplasm. It catalyses the reaction guanosine(1516) in 16S rRNA + S-adenosyl-L-methionine = N(2)-methylguanosine(1516) in 16S rRNA + S-adenosyl-L-homocysteine + H(+). Specifically methylates the guanosine in position 1516 of 16S rRNA. The sequence is that of Ribosomal RNA small subunit methyltransferase J from Yersinia pseudotuberculosis serotype O:3 (strain YPIII).